Reading from the N-terminus, the 982-residue chain is Polyribonucleotide nucleotidyltransferase 2, mitochondrial (982 aa).

Residues 1-39 (MSMAVASLRLLARGGRRRARFPAPLSVPGGRAAFLSGAA) constitute a mitochondrion transit peptide. In terms of domain architecture, KH spans 624-678 (PRLATLSFSSDSLRKLLFHRKKIEQETGARVSVSDGTVTIVAKTQPIMDKAIEKV). An S1 motif 1 domain is found at 689 to 757 (GRTYKGVVSS…LRGNIKLSLK (69 aa)). Disordered regions lie at residues 792-814 (PSKD…EETP) and 832-892 (QDVT…NDVL). Low complexity-rich tracts occupy residues 846–855 (AKSSPKLSKP) and 868–877 (KKTSGASTTA). The S1 motif 2 domain occupies 920–982 (GDVVTAKVYQ…KGIPVFSLLD (63 aa)).

It belongs to the polyribonucleotide nucleotidyltransferase family.

Its subcellular location is the mitochondrion. The enzyme catalyses RNA(n+1) + phosphate = RNA(n) + a ribonucleoside 5'-diphosphate. Functionally, involved in the 3'-end maturation of mitochondrial mRNAs, rRNAs and tRNAs. Functions as a poly(A) mRNA 3'-5' degrading phosphorylase. The polypeptide is Polyribonucleotide nucleotidyltransferase 2, mitochondrial (PNP2) (Oryza sativa subsp. japonica (Rice)).